We begin with the raw amino-acid sequence, 274 residues long: tRNA pseudouridine synthase A (274 aa).

The active-site Nucleophile is D60. Substrate is bound at residue Y118.

The protein belongs to the tRNA pseudouridine synthase TruA family. As to quaternary structure, homodimer.

It catalyses the reaction uridine(38/39/40) in tRNA = pseudouridine(38/39/40) in tRNA. Its function is as follows. Formation of pseudouridine at positions 38, 39 and 40 in the anticodon stem and loop of transfer RNAs. This chain is tRNA pseudouridine synthase A, found in Picosynechococcus sp. (strain ATCC 27264 / PCC 7002 / PR-6) (Agmenellum quadruplicatum).